We begin with the raw amino-acid sequence, 127 residues long: Large ribosomal subunit protein bL17 (127 aa).

Belongs to the bacterial ribosomal protein bL17 family. Part of the 50S ribosomal subunit. Contacts protein L32.

The chain is Large ribosomal subunit protein bL17 from Enterococcus faecalis (strain ATCC 700802 / V583).